The following is a 301-amino-acid chain: MAQNVYGPGVRIGNWNEDVYLEEELMKDFLEKRDKGKLLIQRSRRLKQNLLRPMQLSVTEDGYIHYGDKVMLVNPDDPDTEADVFLRGDLSLCMTPDEIQSHLKDELEVPCGLSAVQAKTPIGRNTFIILSVHRDATGQVLRYGQDFCLGITGGFDNKMLYLSSDHRTLLKSSKRSWLQEVYLTDEVSHVNCWQAAFPDPQLRLEYEGFPVPANAKILINHCHTNRGLAAHRHLFLSTYFGKEAEVVAHTYLDSHRVEKPRNHWMLVTGNPRDASSSMLDLPKPPTEDTRAMEQAMGLDTQ.

Residues 269-301 (GNPRDASSSMLDLPKPPTEDTRAMEQAMGLDTQ) form a disordered region.

Microtubule inner protein component of sperm flagellar doublet microtubules. In terms of tissue distribution, expressed in airway epithelial cells.

The protein resides in the cytoplasm. The protein localises to the cytoskeleton. It localises to the cilium axoneme. It is found in the flagellum axoneme. Its function is as follows. Microtubule inner protein (MIP) part of the dynein-decorated doublet microtubules (DMTs) in cilia axoneme, which is required for motile cilia beating. In Homo sapiens (Human), this protein is Cilia- and flagella-associated protein 161.